The sequence spans 453 residues: Na(+)/H(+) antiporter NhaA (453 aa).

The next 11 helical transmembrane spans lie at 27–47 (FLHI…SALI), 78–98 (LHFW…GMEI), 114–134 (ILPI…YFIF), 143–163 (GWAV…ALLG), 172–192 (IILL…IAFF), 201–221 (GLLI…IGLA), 222–242 (SAWL…VTGV), 316–336 (PWVA…VSFA), 346–366 (FLIV…GIIT), 385–405 (WAGI…SIFV), and 421–441 (IGVL…GFIY).

The protein belongs to the NhaA Na(+)/H(+) (TC 2.A.33) antiporter family.

Its subcellular location is the cell inner membrane. The enzyme catalyses Na(+)(in) + 2 H(+)(out) = Na(+)(out) + 2 H(+)(in). In terms of biological role, na(+)/H(+) antiporter that extrudes sodium in exchange for external protons. The sequence is that of Na(+)/H(+) antiporter NhaA from Bartonella tribocorum (strain CIP 105476 / IBS 506).